The following is a 208-amino-acid chain: Large ribosomal subunit protein bL9 (208 aa).

The interval 161 to 208 (KKRKIEKEVEEGSGTSVDESLKLDSVSDSIDTSGVNSSDKEEENNIIE) is disordered. Polar residues predominate over residues 186–197 (VSDSIDTSGVNS).

Belongs to the bacterial ribosomal protein bL9 family.

Binds to the 23S rRNA. The chain is Large ribosomal subunit protein bL9 from Ehrlichia canis (strain Jake).